A 109-amino-acid chain; its full sequence is Parvalbumin beta (109 aa).

Position 1 is an N-acetylserine (Ser-1). 2 EF-hand domains span residues 38–73 (KTPD…FASS) and 77–109 (LTDK…VKEA). Residues Asp-51, Asp-53, Ser-55, Phe-57, Glu-59, Glu-62, Asp-90, Asp-92, Asp-94, Lys-96, and Glu-101 each coordinate Ca(2+).

The protein belongs to the parvalbumin family.

Functionally, in muscle, parvalbumin is thought to be involved in relaxation after contraction. It binds two calcium ions. The protein is Parvalbumin beta of Opsanus tau (Oyster toadfish).